We begin with the raw amino-acid sequence, 551 residues long: Adenylyl cyclase-associated protein (551 aa).

A disordered region spans residues 34–55 (SGHKPLPNMHRPSRDSNSQTHN). At Ser92 the chain carries Phosphoserine. The residue at position 96 (Thr96) is a Phosphothreonine. Residues 288–300 (SASKTQAPSSGDS) show a composition bias toward polar residues. Disordered stretches follow at residues 288–333 (SASK…NKGD) and 348–395 (TSGL…PVKP). The span at 305–315 (LPPPPPPPPPS) shows a compositional bias: pro residues. The segment covering 352–361 (RKVDKSEMTH) has biased composition (basic and acidic residues). In terms of domain architecture, C-CAP/cofactor C-like spans 395-529 (PPRIELENTK…EEGDYAERAV (135 aa)).

It belongs to the CAP family.

Functionally, the N-terminal domain binds to adenylyl cyclase, thereby enabling adenylyl cyclase to be activated by upstream regulatory signals, such as Ras. The C-terminal domain is required for normal cellular morphology and growth control. This Schizosaccharomyces pombe (strain 972 / ATCC 24843) (Fission yeast) protein is Adenylyl cyclase-associated protein (cap1).